The following is a 338-amino-acid chain: 1-aminocyclopropane-1-carboxylate deaminase (338 aa).

Position 51 is an N6-(pyridoxal phosphate)lysine (Lys-51). The active-site Nucleophile is the Ser-78.

The protein belongs to the ACC deaminase/D-cysteine desulfhydrase family. In terms of assembly, homotrimer. Pyridoxal 5'-phosphate is required as a cofactor.

The catalysed reaction is 1-aminocyclopropane-1-carboxylate + H2O = 2-oxobutanoate + NH4(+). Catalyzes a cyclopropane ring-opening reaction, the irreversible conversion of 1-aminocyclopropane-1-carboxylate (ACC) to ammonia and alpha-ketobutyrate. Allows growth on ACC as a nitrogen source. This chain is 1-aminocyclopropane-1-carboxylate deaminase, found in Pseudomonas putida (Arthrobacter siderocapsulatus).